The primary structure comprises 968 residues: Polycystin-2 (968 aa).

Polar residues predominate over residues 1–11 (MVNSSRVQPQQ). 2 disordered regions span residues 1-28 (MVNS…DPGR) and 58-181 (RIRQ…LPLE). The Cytoplasmic portion of the chain corresponds to 1–219 (MVNSSRVQPQ…STNREKYLKS (219 aa)). Residues 62–83 (AAARDPPAGAAASPSPPLSSCS) are compositionally biased toward low complexity. A phosphoserine mark is found at serine 76 and serine 80. The segment covering 95–107 (EAEEEEEEVEGEE) has biased composition (acidic residues). A compositionally biased stretch (low complexity) spans 123 to 139 (RRSAASSAVSSVGARSR). Arginine 137 carries the post-translational modification Omega-N-methylarginine. Residues 220–241 (VLRELVTYLLFLIVLCILTYGM) traverse the membrane as a helical segment. At 242–468 (MSSNVYYYTR…PLKLIRYVTT (227 aa)) the chain is on the extracellular side. Residues asparagine 299 and asparagine 305 are each glycosylated (N-linked (GlcNAc...) asparagine). N-linked (GlcNAc...) (complex) asparagine glycosylation occurs at asparagine 328. Residues cysteine 331 and cysteine 344 are joined by a disulfide bond. Residues asparagine 362 and asparagine 375 are each glycosylated (N-linked (GlcNAc...) asparagine). Residues 469-489 (FDFFLAACEIIFCFFIFYYVV) form a helical membrane-spanning segment. Over 490–505 (EEILEIRIHKLHYFRS) the chain is Cytoplasmic. Residues 506-526 (FWNCLDVVIVVLSVVAIGINI) traverse the membrane as a helical segment. Residues 527–552 (YRTSNVEVLLQFLEDQNTFPNFEHLA) are Extracellular-facing. Residues 553-573 (YWQIQFNNIAAVTVFFVWIKL) form a helical membrane-spanning segment. Glutamine 557 is a binding site for cholesterol. Residues 574-597 (FKFINFNRTMSQLSTTMSRCAKDL) are Cytoplasmic-facing. Residues 598–619 (FGFAIMFFIIFLAYAQLAYLVF) traverse the membrane as a helical segment. Residues 620–631 (GTQVDDFSTFQE) lie on the Extracellular side of the membrane. The segment at residues 632–646 (CIFTQFRIILGDINF) is an intramembrane region (pore-forming). Residue leucine 641 participates in Ca(2+) binding. The Selectivity filter motif lies at 641–643 (LGD). Topologically, residues 647 to 654 (AEIEEANR) are extracellular. The chain crosses the membrane as a helical span at residues 655–675 (VLGPIYFTTFVFFMFFILLNM). The Cytoplasmic segment spans residues 676-968 (FLAIINDTYS…GGNGSSNVHV (293 aa)). Positions 750–785 (HTDAEIEAIFTKYDQDGDQELTEHEHQQMRDDLEKE) constitute an EF-hand domain. The Ca(2+) site is built by aspartate 763, aspartate 765, aspartate 767, glutamate 769, and glutamate 774. A disordered region spans residues 764 to 831 (QDGDQELTEH…HSSRRRGSIS (68 aa)). The segment covering 770–795 (LTEHEHQQMRDDLEKEREDLDLDHSS) has biased composition (basic and acidic residues). Residues 796 to 807 (LPRPMSSRSFPR) show a composition bias toward low complexity. 4 positions are modified to phosphoserine: serine 801, serine 808, serine 812, and serine 829. Positions 803 to 822 (RSFPRSLDDSEEDDDEDSGH) are linker. An important for interaction with PACS1 and PACS2 region spans residues 810 to 821 (DDSEEDDDEDSG). A coiled-coil region spans residues 833-872 (GVSYEEFQVLVRRVDRMEHSIGSIVSKIDAVIVKLEIMER). The interval 917-968 (ESDDAASQISHGLGTPVGLNGQPRPRSSRPSSSQSTEGMEGAGGNGSSNVHV) is disordered. Positions 938–951 (QPRPRSSRPSSSQS) are enriched in low complexity.

The protein belongs to the polycystin family. In terms of assembly, homotetramer. Component of the heterotetrameric polycystin channel complex with PKD1; the tetramer contains one PKD1 chain and three PKD2 chains. Isoform 1 interacts with PKD1 while isoform 3 does not. Interacts with PKD1L1; probably forms a Ca(2+) channel. Interacts with CD2AP. Interacts with HAX1. Interacts with NEK8. Part of a complex containing AKAP5, ADCY5, ADCY6 and PDE4C. Interacts (via C-terminus) with TRPV4 (via C-terminus). Interacts (via C-terminal acidic region) with PACS1 and PACS2; these interactions retain the protein in the endoplasmic reticulum and prevent trafficking to the cell membrane. Interacts with TMEM33. Form a heterotetramer with TRPC1 with a 2:2 stoichiometry; has distinct channel properties separate from PKD2 or TRPC1 homomers alone. Interacts with TMEM120A; TMEM120A inhibits PKD2 channel activity through the physical association of PKD2 with TMEM120A. Interacts (via N-terminus) with RYR2; regulates RYR2 channel activity. Post-translationally, phosphorylated. Phosphorylation is important for protein function; a mutant that lacks the N-terminal phosphorylation sites cannot complement a zebrafish pkd2-deficient mutant. PKD-mediated phosphorylation at the C-terminus regulates its function in the release of Ca(2+) stores from the endoplasmic reticulum. Phosphorylation at Ser-812 regulates PKD2 trafficking. Phosphorylation at Ser-76 is required for PKD2 trafficking to or retention at the lateral plasma membrane. Phosphorylation at Ser-801, Ser-812 and Ser-829 regulates PKD2 channel activity. N-glycosylated. The four subunits in a tetramer probably differ in the extent of glycosylation; simultaneous glycosylation of all experimentally validated sites would probably create steric hindrance. Thus, glycosylation at Asn-305 is not compatible with glycosylation at Asn-328; only one of these two residues is glycosylated at a given time. In terms of processing, sumoylated by SUMO1; sumoylation regulates PKD2 membrane recycling and is necessary for intravascular pressure-induced arterial contractility. As to expression, detected in fetal and adult kidney. Detected at the thick ascending limb of the loop of Henle, at distal tubules, including the distal convoluted tubule and cortical collecting tubules, with weak staining of the collecting duct. Detected on placenta syncytiotrophoblasts (at protein level). Strongly expressed in ovary, fetal and adult kidney, testis, and small intestine. Not detected in peripheral leukocytes.

The protein localises to the cell projection. It localises to the cilium membrane. It is found in the endoplasmic reticulum membrane. The protein resides in the cell membrane. Its subcellular location is the basolateral cell membrane. The protein localises to the cytoplasmic vesicle membrane. It localises to the golgi apparatus. It is found in the vesicle. The protein resides in the secreted. Its subcellular location is the extracellular exosome. The catalysed reaction is K(+)(in) = K(+)(out). It carries out the reaction Na(+)(in) = Na(+)(out). It catalyses the reaction Ca(2+)(in) = Ca(2+)(out). With respect to regulation, channel activity is regulated by phosphorylation. Channel activity is regulated by intracellular Ca(2+). At the endoplasmic reticulum membrane (ER), TMEM33 enhances its channel activity. TMEM120A inhibits the channel activity of PKD2, and mediates mechanosensitivity of the PKD2-TMEM120A channel complex. PKD1/PKD2 complex on the plasma membrane is activated by PKD1 N-terminus. Functionally, forms a nonselective cation channel. Can function as a homotetrameric ion channel or can form heteromer with PKD1. Displays distinct function depending on its subcellular localization and regulation by its binding partners. In primary cilium functions as a cation channel, with a preference for monovalent cations over divalent cations that allows K(+), Na(+) and Ca(2+) influx, with low selectivity for Ca(2+). Involved in fluid-flow mechanosensation by the primary cilium in renal epithelium. In the endoplasmic reticulum, likely functions as a K(+) channel to facilitate Ca(2+) release. The heterotetrameric PKD1/PKD2 channel has higher Ca(2+) permeability than homomeric PKD2 channel and acts as a primarily Ca(2+)-permeable channel. Interacts with and acts as a regulator of a number of other channels, such as TRPV4, TRPC1, IP3R, RYR2, ultimately further affecting intracellular signaling, to modulate intracellular Ca(2+) signaling. Together with TRPV4, forms mechano- and thermosensitive channels in cilium. In cardiomyocytes, PKD2 modulates Ca(2+) release from stimulated RYR2 receptors through direct association. Also involved in left-right axis specification via its role in sensing nodal flow; forms a complex with PKD1L1 in cilia to facilitate flow detection in left-right patterning. Acts as a regulator of cilium length together with PKD1. Mediates systemic blood pressure and contributes to the myogenic response in cerebral arteries though vasoconstriction. The chain is Polycystin-2 from Homo sapiens (Human).